The following is a 109-amino-acid chain: Phosphoribosyl-AMP cyclohydrolase (109 aa).

Residue D80 participates in Mg(2+) binding. C81 provides a ligand contact to Zn(2+). Mg(2+) is bound by residues D82 and D84. Zn(2+) is bound by residues C97 and C104.

This sequence belongs to the PRA-CH family. In terms of assembly, homodimer. Requires Mg(2+) as cofactor. Zn(2+) serves as cofactor.

It is found in the cytoplasm. It catalyses the reaction 1-(5-phospho-beta-D-ribosyl)-5'-AMP + H2O = 1-(5-phospho-beta-D-ribosyl)-5-[(5-phospho-beta-D-ribosylamino)methylideneamino]imidazole-4-carboxamide. Its pathway is amino-acid biosynthesis; L-histidine biosynthesis; L-histidine from 5-phospho-alpha-D-ribose 1-diphosphate: step 3/9. Functionally, catalyzes the hydrolysis of the adenine ring of phosphoribosyl-AMP. This chain is Phosphoribosyl-AMP cyclohydrolase, found in Clostridium botulinum (strain Alaska E43 / Type E3).